A 1438-amino-acid chain; its full sequence is Gag-Pol polyprotein (1438 aa).

Residue Gly-2 is the site of N-myristoyl glycine; by host attachment. The Nuclear export signal signature appears at 16-22 (WEKIYLR). The Nuclear localization signal motif lies at 26–32 (KKKYMMK). 2 consecutive CCHC-type zinc fingers follow at residues 385–402 (VKCFNCGKEGHIARNCKA) and 406–423 (KGCWKCGQEGHQMRNCTN). A disordered region spans residues 439–481 (GKAREFPSEETRTNSSTNRELRVQGGGTCPEGGSEERGDREQA). Residues 440 to 450 (KAREFPSEETR) show a composition bias toward basic and acidic residues. The Peptidase A2 domain occupies 507 to 576 (KEALLDTGAD…TPVNIIGRNI (70 aa)). Residue Asp-512 is the For protease activity; shared with dimeric partner of the active site. Residues 630 to 820 (EGKISRVGPE…PPFLWMGYEL (191 aa)) form the Reverse transcriptase domain. 3 residues coordinate Mg(2+): Asp-696, Asp-771, and Asp-772. The interval 813–821 (FLWMGYELH) is RT 'primer grip'. The Tryptophan repeat motif signature appears at 984-1000 (WEAWWTDYWQATWIPEW). The 124-residue stretch at 1020 to 1143 (IPGAETFYVD…IDKLVSSGIR (124 aa)) folds into the RNase H type-1 domain. Positions 1029, 1064, 1084, and 1135 each coordinate Mg(2+). The Integrase-type zinc-finger motif lies at 1149–1190 (DGIDKAQEEHEKYHNNWRAMASDFNLPPIVAKEIVANCDKCQ). Positions 1158, 1162, 1186, and 1189 each coordinate Zn(2+). An Integrase catalytic domain is found at 1200–1350 (VDCSPGIWQL…SAGERIIDIL (151 aa)). 2 residues coordinate Mg(2+): Asp-1210 and Asp-1262. The segment at residues 1369–1416 (FRVYYRDSRDPIWKGPAKLLWKGEGAVVLQDQEEIKVVPRRKAKIIRD) is a DNA-binding region (integrase-type).

Homotrimer. Interacts with gp41 (via C-terminus). In terms of assembly, homodimer. The active site consists of two apposed aspartic acid residues. As to quaternary structure, heterodimer of p66 RT and p51 RT (RT p66/p51). Heterodimerization of RT is essential for DNA polymerase activity. Despite the sequence identities, p66 RT and p51 RT have distinct folding. Homotetramer; may further associate as a homohexadecamer. Mg(2+) serves as cofactor. In terms of processing, specific enzymatic cleavages by the viral protease yield mature proteins. The protease is released by autocatalytic cleavage. The polyprotein is cleaved during and after budding, this process is termed maturation. Proteolytic cleavage of p66 RT removes the RNase H domain to yield the p51 RT subunit. Capsid protein p24 is phosphorylated.

The protein localises to the virion. Its subcellular location is the host nucleus. It is found in the host cytoplasm. It localises to the host cell membrane. It catalyses the reaction Specific for a P1 residue that is hydrophobic, and P1' variable, but often Pro.. It carries out the reaction Endohydrolysis of RNA in RNA/DNA hybrids. Three different cleavage modes: 1. sequence-specific internal cleavage of RNA. Human immunodeficiency virus type 1 and Moloney murine leukemia virus enzymes prefer to cleave the RNA strand one nucleotide away from the RNA-DNA junction. 2. RNA 5'-end directed cleavage 13-19 nucleotides from the RNA end. 3. DNA 3'-end directed cleavage 15-20 nucleotides away from the primer terminus.. The catalysed reaction is 3'-end directed exonucleolytic cleavage of viral RNA-DNA hybrid.. The enzyme catalyses DNA(n) + a 2'-deoxyribonucleoside 5'-triphosphate = DNA(n+1) + diphosphate. Its activity is regulated as follows. The viral protease is inhibited by many synthetic protease inhibitors (PIs), such as amprenavir, atazanavir, indinavir, loprinavir, nelfinavir, ritonavir and saquinavir. RT can be inhibited either by nucleoside RT inhibitors (NRTIs) or by non nucleoside RT inhibitors (NNRTIs). NRTIs act as chain terminators, whereas NNRTIs inhibit DNA polymerization by binding a small hydrophobic pocket near the RT active site and inducing an allosteric change in this region. Classical NRTIs are abacavir, adefovir (PMEA), didanosine (ddI), lamivudine (3TC), stavudine (d4T), tenofovir (PMPA), zalcitabine (ddC), and zidovudine (AZT). Classical NNRTIs are atevirdine (BHAP U-87201E), delavirdine, efavirenz (DMP-266), emivirine (I-EBU), and nevirapine (BI-RG-587). The tritherapies used as a basic effective treatment of AIDS associate two NRTIs and one NNRTI. Use of protease inhibitors in tritherapy regimens permit more ambitious therapeutic strategies. In terms of biological role, gag-Pol polyprotein and Gag polyprotein may regulate their own translation, by the binding genomic RNA in the 5'-UTR. At low concentration, Gag-Pol and Gag would promote translation, whereas at high concentration, the polyproteins encapsidate genomic RNA and then shut off translation. Matrix protein p17 has two main functions: in infected cell, it targets Gag and Gag-pol polyproteins to the plasma membrane via a multipartite membrane-binding signal, that includes its myristointegration complex. The myristoylation signal and the NLS exert conflicting influences its subcellular localization. The key regulation of these motifs might be phosphorylation of a portion of MA molecules on the C-terminal tyrosine at the time of virus maturation, by virion-associated cellular tyrosine kinase. Implicated in the release from host cell mediated by Vpu. Its function is as follows. Capsid protein p24 forms the conical core that encapsulates the genomic RNA-nucleocapsid complex in the virion. The core is constituted by capsid protein hexamer subunits. The core is disassembled soon after virion entry. Interaction with host PPIA/CYPA protects the virus from restriction by host TRIM5-alpha and from an unknown antiviral activity in host cells. This capsid restriction by TRIM5 is one of the factors which restricts SIV to the simian species. Functionally, nucleocapsid protein p7 encapsulates and protects viral dimeric unspliced (genomic) RNA. Binds these RNAs through its zinc fingers. Facilitates rearangement of nucleic acid secondary structure during retrotranscription of genomic RNA. This capability is referred to as nucleic acid chaperone activity. In terms of biological role, the aspartyl protease mediates proteolytic cleavages of Gag and Gag-Pol polyproteins during or shortly after the release of the virion from the plasma membrane. Cleavages take place as an ordered, step-wise cascade to yield mature proteins. This process is called maturation. Displays maximal activity during the budding process just prior to particle release from the cell. Also cleaves Nef and Vif, probably concomitantly with viral structural proteins on maturation of virus particles. Hydrolyzes host EIF4GI and PABP1 in order to shut off the capped cellular mRNA translation. The resulting inhibition of cellular protein synthesis serves to ensure maximal viral gene expression and to evade host immune response. Reverse transcriptase/ribonuclease H (RT) is a multifunctional enzyme that converts the viral dimeric RNA genome into dsDNA in the cytoplasm, shortly after virus entry into the cell. This enzyme displays a DNA polymerase activity that can copy either DNA or RNA templates, and a ribonuclease H (RNase H) activity that cleaves the RNA strand of RNA-DNA heteroduplexes in a partially processive 3' to 5' endonucleasic mode. Conversion of viral genomic RNA into dsDNA requires many steps. A tRNA binds to the primer-binding site (PBS) situated at the 5'-end of the viral RNA. RT uses the 3' end of the tRNA primer to perform a short round of RNA-dependent minus-strand DNA synthesis. The reading proceeds through the U5 region and ends after the repeated (R) region which is present at both ends of viral RNA. The portion of the RNA-DNA heteroduplex is digested by the RNase H, resulting in a ssDNA product attached to the tRNA primer. This ssDNA/tRNA hybridizes with the identical R region situated at the 3' end of viral RNA. This template exchange, known as minus-strand DNA strong stop transfer, can be either intra- or intermolecular. RT uses the 3' end of this newly synthesized short ssDNA to perform the RNA-dependent minus-strand DNA synthesis of the whole template. RNase H digests the RNA template except for two polypurine tracts (PPTs) situated at the 5'-end and near the center of the genome. It is not clear if both polymerase and RNase H activities are simultaneous. RNase H can probably proceed both in a polymerase-dependent (RNA cut into small fragments by the same RT performing DNA synthesis) and a polymerase-independent mode (cleavage of remaining RNA fragments by free RTs). Secondly, RT performs DNA-directed plus-strand DNA synthesis using the PPTs that have not been removed by RNase H as primers. PPTs and tRNA primers are then removed by RNase H. The 3' and 5' ssDNA PBS regions hybridize to form a circular dsDNA intermediate. Strand displacement synthesis by RT to the PBS and PPT ends produces a blunt ended, linear dsDNA copy of the viral genome that includes long terminal repeats (LTRs) at both ends. Its function is as follows. Integrase catalyzes viral DNA integration into the host chromosome, by performing a series of DNA cutting and joining reactions. This enzyme activity takes place after virion entry into a cell and reverse transcription of the RNA genome in dsDNA. The first step in the integration process is 3' processing. This step requires a complex comprising the viral genome, matrix protein, Vpr and integrase. This complex is called the pre-integration complex (PIC). The integrase protein removes 2 nucleotides from each 3' end of the viral DNA, leaving recessed CA OH's at the 3' ends. In the second step, the PIC enters cell nucleus. This process is mediated through integrase and Vpr proteins, and allows the virus to infect a non dividing cell. This ability to enter the nucleus is specific of lentiviruses, other retroviruses cannot and rely on cell division to access cell chromosomes. In the third step, termed strand transfer, the integrase protein joins the previously processed 3' ends to the 5' ends of strands of target cellular DNA at the site of integration. The 5'-ends are produced by integrase-catalyzed staggered cuts, 5 bp apart. A Y-shaped, gapped, recombination intermediate results, with the 5'-ends of the viral DNA strands and the 3' ends of target DNA strands remaining unjoined, flanking a gap of 5 bp. The last step is viral DNA integration into host chromosome. This involves host DNA repair synthesis in which the 5 bp gaps between the unjoined strands are filled in and then ligated. Since this process occurs at both cuts flanking the SIV genome, a 5 bp duplication of host DNA is produced at the ends of SIV integration. Alternatively, Integrase may catalyze the excision of viral DNA just after strand transfer, this is termed disintegration. This chain is Gag-Pol polyprotein (gag-pol), found in Pan troglodytes (Chimpanzee).